A 267-amino-acid chain; its full sequence is tRNA pseudouridine synthase A (267 aa).

The active-site Nucleophile is Asp54. Tyr114 contacts substrate.

Belongs to the tRNA pseudouridine synthase TruA family. In terms of assembly, homodimer.

It carries out the reaction uridine(38/39/40) in tRNA = pseudouridine(38/39/40) in tRNA. Formation of pseudouridine at positions 38, 39 and 40 in the anticodon stem and loop of transfer RNAs. This is tRNA pseudouridine synthase A from Tropheryma whipplei (strain Twist) (Whipple's bacillus).